Here is a 274-residue protein sequence, read N- to C-terminus: MAIHLYKTSTPSTRNGTVDSQVKSNPRNNLIYGQRRCGKGRNARGIITARHRGGGHKRLYRKIDFRRNEKDIYGRIVTIEYDPNRNAYICLIHYGDGEKRYILHPRGAIIGDTIVSGTEVPIKMGNALPLTDMPLGTAIHNIEITLGKGGQLARAAGAVPKLIAKEGKSATLKLPSGEVRLISKNCSATVGQVGNVGVNQKSLGRAGSKRWLGKRPVVRGVVMNPVNHPHGGGEGRAPIGRKKPTTPWGYPALGRRSRKRNKYSDNLILRRRSK.

Disordered stretches follow at residues 1–25 (MAIH…VKSN) and 223–274 (MNPV…RRSK). A compositionally biased stretch (polar residues) spans 7–25 (KTSTPSTRNGTVDSQVKSN).

It belongs to the universal ribosomal protein uL2 family. Part of the 50S ribosomal subunit.

The protein resides in the plastid. The protein localises to the chloroplast. The chain is Large ribosomal subunit protein uL2cy (rpl2-B) from Atropa belladonna (Belladonna).